We begin with the raw amino-acid sequence, 381 residues long: Dual-specificity RNA methyltransferase RlmN (381 aa).

Glutamate 95 acts as the Proton acceptor in catalysis. Residues 101–339 (DGRRGTLCVS…MTTVRTTRGD (239 aa)) form the Radical SAM core domain. A disulfide bridge connects residues cysteine 108 and cysteine 345. Positions 115, 119, and 122 each coordinate [4Fe-4S] cluster. S-adenosyl-L-methionine-binding positions include 169-170 (GE), serine 201, 223-225 (SLH), and asparagine 302. Catalysis depends on cysteine 345, which acts as the S-methylcysteine intermediate.

The protein belongs to the radical SAM superfamily. RlmN family. Requires [4Fe-4S] cluster as cofactor.

It is found in the cytoplasm. It carries out the reaction adenosine(2503) in 23S rRNA + 2 reduced [2Fe-2S]-[ferredoxin] + 2 S-adenosyl-L-methionine = 2-methyladenosine(2503) in 23S rRNA + 5'-deoxyadenosine + L-methionine + 2 oxidized [2Fe-2S]-[ferredoxin] + S-adenosyl-L-homocysteine. It catalyses the reaction adenosine(37) in tRNA + 2 reduced [2Fe-2S]-[ferredoxin] + 2 S-adenosyl-L-methionine = 2-methyladenosine(37) in tRNA + 5'-deoxyadenosine + L-methionine + 2 oxidized [2Fe-2S]-[ferredoxin] + S-adenosyl-L-homocysteine. In terms of biological role, specifically methylates position 2 of adenine 2503 in 23S rRNA and position 2 of adenine 37 in tRNAs. m2A2503 modification seems to play a crucial role in the proofreading step occurring at the peptidyl transferase center and thus would serve to optimize ribosomal fidelity. The chain is Dual-specificity RNA methyltransferase RlmN from Alcanivorax borkumensis (strain ATCC 700651 / DSM 11573 / NCIMB 13689 / SK2).